Reading from the N-terminus, the 300-residue chain is Putative S-adenosyl-L-methionine-dependent methyltransferase MMAR_1058 (300 aa).

S-adenosyl-L-methionine contacts are provided by residues aspartate 127 and 156-157 (DL).

This sequence belongs to the UPF0677 family.

Exhibits S-adenosyl-L-methionine-dependent methyltransferase activity. This is Putative S-adenosyl-L-methionine-dependent methyltransferase MMAR_1058 from Mycobacterium marinum (strain ATCC BAA-535 / M).